Reading from the N-terminus, the 440-residue chain is Enolase (440 aa).

Gln-163 contacts (2R)-2-phosphoglycerate. Glu-205 functions as the Proton donor in the catalytic mechanism. Mg(2+) contacts are provided by Asp-242, Glu-288, and Asp-315. Positions 340, 369, 370, and 391 each coordinate (2R)-2-phosphoglycerate. The Proton acceptor role is filled by Lys-340.

The protein belongs to the enolase family. The cofactor is Mg(2+).

The protein resides in the cytoplasm. It is found in the secreted. The protein localises to the cell surface. It carries out the reaction (2R)-2-phosphoglycerate = phosphoenolpyruvate + H2O. The protein operates within carbohydrate degradation; glycolysis; pyruvate from D-glyceraldehyde 3-phosphate: step 4/5. In terms of biological role, catalyzes the reversible conversion of 2-phosphoglycerate (2-PG) into phosphoenolpyruvate (PEP). It is essential for the degradation of carbohydrates via glycolysis. This is Enolase from Pediococcus pentosaceus (strain ATCC 25745 / CCUG 21536 / LMG 10740 / 183-1w).